The primary structure comprises 314 residues: 2,3,4,5-tetrahydropyridine-2,6-dicarboxylate N-succinyltransferase (314 aa).

Aspartate 163 and glutamate 180 together coordinate Mg(2+). Glutamate 196 acts as the Acyl-anhydride intermediate in catalysis. Residues arginine 198, glycine 213, serine 216, alanine 239, 254 to 255 (EA), glycine 262, lysine 274, and 287 to 290 (RRNS) contribute to the succinyl-CoA site.

Belongs to the type 2 tetrahydrodipicolinate N-succinyltransferase family. Homotrimer.

It localises to the cytoplasm. It catalyses the reaction (S)-2,3,4,5-tetrahydrodipicolinate + succinyl-CoA + H2O = (S)-2-succinylamino-6-oxoheptanedioate + CoA. The protein operates within amino-acid biosynthesis; L-lysine biosynthesis via DAP pathway; LL-2,6-diaminopimelate from (S)-tetrahydrodipicolinate (succinylase route): step 1/3. Functionally, catalyzes the conversion of the cyclic tetrahydrodipicolinate (THDP) into the acyclic N-succinyl-L-2-amino-6-oxopimelate using succinyl-CoA. The protein is 2,3,4,5-tetrahydropyridine-2,6-dicarboxylate N-succinyltransferase of Mycolicibacterium smegmatis (strain ATCC 700084 / mc(2)155) (Mycobacterium smegmatis).